A 515-amino-acid chain; its full sequence is 2,3-bisphosphoglycerate-independent phosphoglycerate mutase (515 aa).

D14 and S64 together coordinate Mn(2+). S64 functions as the Phosphoserine intermediate in the catalytic mechanism. Residues H125, 155–156, R187, R193, 263–266, and K337 contribute to the substrate site; these read RD and RADR. Mn(2+) is bound by residues D404, H408, D445, H446, and H464.

This sequence belongs to the BPG-independent phosphoglycerate mutase family. As to quaternary structure, monomer. It depends on Mn(2+) as a cofactor.

It catalyses the reaction (2R)-2-phosphoglycerate = (2R)-3-phosphoglycerate. It participates in carbohydrate degradation; glycolysis; pyruvate from D-glyceraldehyde 3-phosphate: step 3/5. Its function is as follows. Catalyzes the interconversion of 2-phosphoglycerate and 3-phosphoglycerate. This chain is 2,3-bisphosphoglycerate-independent phosphoglycerate mutase, found in Yersinia pestis bv. Antiqua (strain Antiqua).